Here is a 435-residue protein sequence, read N- to C-terminus: ATP-dependent protease ATPase subunit HslU (435 aa).

Residues isoleucine 18, 60–65 (GVGKTE), aspartate 248, glutamate 313, and arginine 385 each bind ATP.

Belongs to the ClpX chaperone family. HslU subfamily. As to quaternary structure, a double ring-shaped homohexamer of HslV is capped on each side by a ring-shaped HslU homohexamer. The assembly of the HslU/HslV complex is dependent on binding of ATP.

The protein resides in the cytoplasm. Its function is as follows. ATPase subunit of a proteasome-like degradation complex; this subunit has chaperone activity. The binding of ATP and its subsequent hydrolysis by HslU are essential for unfolding of protein substrates subsequently hydrolyzed by HslV. HslU recognizes the N-terminal part of its protein substrates and unfolds these before they are guided to HslV for hydrolysis. This is ATP-dependent protease ATPase subunit HslU from Rhizobium leguminosarum bv. trifolii (strain WSM2304).